A 358-amino-acid chain; its full sequence is Aminomethyltransferase (358 aa).

This sequence belongs to the GcvT family. In terms of assembly, the glycine cleavage system is composed of four proteins: P, T, L and H.

It catalyses the reaction N(6)-[(R)-S(8)-aminomethyldihydrolipoyl]-L-lysyl-[protein] + (6S)-5,6,7,8-tetrahydrofolate = N(6)-[(R)-dihydrolipoyl]-L-lysyl-[protein] + (6R)-5,10-methylene-5,6,7,8-tetrahydrofolate + NH4(+). In terms of biological role, the glycine cleavage system catalyzes the degradation of glycine. In Francisella tularensis subsp. holarctica (strain FTNF002-00 / FTA), this protein is Aminomethyltransferase.